Reading from the N-terminus, the 120-residue chain is Protein RALF-like 1 (120 aa).

The N-terminal stretch at 1–26 (MDKSFTLFLTLTILVVFIISSPPVQA) is a signal peptide. The propeptide at 27-71 (GFANDLGGVAWATTGDNGSGCHGSIAECIGAEEEEMDSEINRRIL) is removed in mature form. An N-linked (GlcNAc...) asparagine glycan is attached at N43. 2 disulfide bridges follow: C89–C99 and C112–C118.

Belongs to the plant rapid alkalinization factor (RALF) family. As to quaternary structure, interacts with FER and promotes its phosphorylation and subsequent activation. Proteolytically cleaved, probably by S1P, a subtilisin-like serine protease (subtilase). Expressed in roots and stems.

It is found in the secreted. In terms of biological role, cell signaling peptide that may regulate plant stress, growth, and development. Mediates a rapid alkalinization of extracellular space by mediating a transient increase in the cytoplasmic Ca(2+) concentration leading to a calcium-dependent signaling events through a cell surface receptor and a concomitant activation of some intracellular mitogen-activated protein kinases. Mostly active in roots. Prevents plant growth (e.g. root and leaf length). Suppresses cell elongation of the primary root by activating the cell surface receptor FER and triggering phosphorylation of AHA2 and subsequent extracellular alkalinization. This is Protein RALF-like 1 (RALF1) from Arabidopsis thaliana (Mouse-ear cress).